Here is a 436-residue protein sequence, read N- to C-terminus: Glutamyl-tRNA reductase (436 aa).

Residues Thr49–Arg52, Ser109, Glu114–Gln116, and Gln120 contribute to the substrate site. The active-site Nucleophile is the Cys50. Gly198–Ser203 lines the NADP(+) pocket.

This sequence belongs to the glutamyl-tRNA reductase family. As to quaternary structure, homodimer.

The catalysed reaction is (S)-4-amino-5-oxopentanoate + tRNA(Glu) + NADP(+) = L-glutamyl-tRNA(Glu) + NADPH + H(+). Its pathway is porphyrin-containing compound metabolism; protoporphyrin-IX biosynthesis; 5-aminolevulinate from L-glutamyl-tRNA(Glu): step 1/2. It functions in the pathway porphyrin-containing compound metabolism; chlorophyll biosynthesis. Its function is as follows. Catalyzes the NADPH-dependent reduction of glutamyl-tRNA(Glu) to glutamate 1-semialdehyde (GSA). This is Glutamyl-tRNA reductase from Prochlorococcus marinus (strain AS9601).